The sequence spans 365 residues: Zinc transporter 7 (365 aa).

A signal peptide spans 1 to 26 (MAYSKACYKLTTITILLLSFTLPSLA). The Extracellular portion of the chain corresponds to 27–56 (GNAENADVSECKAESGDLSCHNNKEAQKLK). Residues 57–77 (IIAIPSILVASMIGVSLPLFS) form a helical membrane-spanning segment. The Cytoplasmic portion of the chain corresponds to 78–90 (RSIPALGPDREMS). A helical transmembrane segment spans residues 91 to 111 (VIVKTLASGVILATGFMHVLP). Residues 112 to 129 (DSFDDLTSKCLPEDPWQK) lie on the Extracellular side of the membrane. A helical transmembrane segment spans residues 130–150 (FPFATFITMISALLVLMIESF). Over 151–210 (AMCAYARRTSKREGEVVPLENGSNSVDTQNDIQTLENGSSYVEKQEKVNEDKTSELLRNK) the chain is Cytoplasmic. The chain crosses the membrane as a helical span at residues 211–231 (VIAQILELGIVVHSVVIGLAM). Topologically, residues 232–242 (GASDNKCTVQS) are extracellular. The helical transmembrane segment at 243 to 263 (LIAALCFHQLFEGMGLGGSIL) threads the bilayer. Residues 264-272 (QAQFKSKTN) are Cytoplasmic-facing. A helical membrane pass occupies residues 273–293 (WTMVFFFSVTTPFGIVLGMAI). Topologically, residues 294-304 (QKIYDETSPTA) are extracellular. The chain crosses the membrane as a helical span at residues 305 to 325 (LIVVGVLNACSAGLLIYMALV). The Cytoplasmic segment spans residues 326-344 (NLLAHEFFGPKIQGNIKLH). Residues 345-365 (VLGYVATFTGAAGMSLMAKWA) form a helical membrane-spanning segment.

This sequence belongs to the ZIP transporter (TC 2.A.5) family.

Its subcellular location is the cell membrane. Its function is as follows. Probably mediates zinc uptake from the rhizosphere. The sequence is that of Zinc transporter 7 (ZIP7) from Arabidopsis thaliana (Mouse-ear cress).